The chain runs to 394 residues: UPF0229 protein RBAM_009260 (394 aa).

Belongs to the UPF0229 family.

The protein is UPF0229 protein RBAM_009260 of Bacillus velezensis (strain DSM 23117 / BGSC 10A6 / LMG 26770 / FZB42) (Bacillus amyloliquefaciens subsp. plantarum).